A 66-amino-acid polypeptide reads, in one-letter code: Small ribosomal subunit protein bS21 (66 aa).

Belongs to the bacterial ribosomal protein bS21 family.

This Maridesulfovibrio salexigens (strain ATCC 14822 / DSM 2638 / NCIMB 8403 / VKM B-1763) (Desulfovibrio salexigens) protein is Small ribosomal subunit protein bS21.